The sequence spans 296 residues: Sulfotransferase 6B1 (296 aa).

The active-site Proton acceptor is His112. Residues Arg134, Ser142, Tyr197, and 253 to 255 (RKG) each bind 3'-phosphoadenylyl sulfate.

This sequence belongs to the sulfotransferase 1 family.

The protein localises to the cytoplasm. The protein resides in the cytosol. The catalysed reaction is thyroxine + 3'-phosphoadenylyl sulfate = thyroxine sulfate + adenosine 3',5'-bisphosphate + H(+). Its activity is regulated as follows. Strongly inhibited by the divalent metal cations Fe(2+), Hg(2+), Co(2+), Zn(2+), Cu(2+) and Cd(2+). Sulfotransferase that utilizes 3'-phospho-5'-adenylyl sulfate (PAPS) as sulfonate donor to catalyze the sulfate conjugation of a variety of xenobiotic and endogenous compounds, including dopamine, T3 (triiodo-L-thyronine), T4 (thyroxine), flavonoids, isoflavonoids, and other phenolic compounds. This is Sulfotransferase 6B1 from Danio rerio (Zebrafish).